Consider the following 97-residue polypeptide: Carboxysome shell protein CsoS1B (97 aa).

The region spanning 8–93 is the BMC domain; sequence ALGMIETRGL…PHKEVEPVLT (86 aa).

This sequence belongs to the bacterial microcompartments protein family. CsoS1 subfamily. In terms of assembly, homohexamer with a small central pore.

The protein resides in the carboxysome. Its function is as follows. One of shell proteins of the carboxysome, a polyhedral inclusion where RuBisCO (ribulose bisphosphate carboxylase, ccbL-ccbS) is sequestered. Assembles into hexamers which make sheets that form the facets of the polyhedral carboxysome. The shell probably limits the diffusion of CO(2) into and out of the carboxysome. This Hydrogenovibrio crunogenus (strain DSM 25203 / XCL-2) (Thiomicrospira crunogena) protein is Carboxysome shell protein CsoS1B.